The sequence spans 495 residues: Histidine--tRNA ligase (495 aa).

This sequence belongs to the class-II aminoacyl-tRNA synthetase family. In terms of assembly, homodimer.

The protein localises to the cytoplasm. It catalyses the reaction tRNA(His) + L-histidine + ATP = L-histidyl-tRNA(His) + AMP + diphosphate + H(+). This is Histidine--tRNA ligase from Bartonella henselae (strain ATCC 49882 / DSM 28221 / CCUG 30454 / Houston 1) (Rochalimaea henselae).